The primary structure comprises 30 residues: Cyclotide hyen-E (30 aa).

The cyclopeptide (Gly-Asn) cross-link spans 1-30 (GVPCGESCVYIPCFTGIINCSCRDKVCYNN). Intrachain disulfides connect cysteine 4–cysteine 20, cysteine 8–cysteine 22, and cysteine 13–cysteine 27.

Post-translationally, this is a cyclic peptide. In terms of tissue distribution, detected in stems (at protein level).

Probably participates in a plant defense mechanism. Has cytotoxic activity against HUVEC cells (LC(50)= 2.17 uM) and various cancer cells including HeLa (LC(50)= 3.05 uM), MCF-7 and K562. Displays very weak hemolytic activity. Binds to and induces leakage in phospholipd membranes, particularly ones containing 1-palmitoyl-2-oleophosphatidylethanolamine (POPE). This Pigea enneasperma (Spade flower) protein is Cyclotide hyen-E.